The sequence spans 252 residues: MFKKLFRQDGNILNSELAEDLPIPRHVAIIMDGNGRWAKKRFLPRIAGHKEGMDVVKRVTRYANAIGIDVLTLYAFSTENWKRPTDEVDFLMKLPVEFFDSFVPELIEENVRVNVMGYRENLPEHTMRAVEKAIADTAHCTGLTLNFALNYGGRSEIITAAKEAMKELVSEGKTSEDLTEELLNDHLMSHGLGDPDLLIRTSGELRLSNFMLWQLAYSEFYFTETHWPDFSKEDFLQAIIEYQNRSRRFGGL.

D32 is an active-site residue. A Mg(2+)-binding site is contributed by D32. Residues 33 to 36 (GNGR), W37, R45, H49, and 77 to 79 (STE) contribute to the substrate site. The active-site Proton acceptor is N80. Substrate is bound by residues W81, R83, R200, and 206–208 (RLS). E219 contributes to the Mg(2+) binding site.

The protein belongs to the UPP synthase family. In terms of assembly, homodimer. Mg(2+) serves as cofactor.

In terms of biological role, catalyzes the condensation of isopentenyl diphosphate (IPP) with allylic pyrophosphates generating different type of terpenoids. This is Isoprenyl transferase from Listeria innocua serovar 6a (strain ATCC BAA-680 / CLIP 11262).